Here is a 90-residue protein sequence, read N- to C-terminus: Probable Fe(2+)-trafficking protein (90 aa).

Belongs to the Fe(2+)-trafficking protein family.

In terms of biological role, could be a mediator in iron transactions between iron acquisition and iron-requiring processes, such as synthesis and/or repair of Fe-S clusters in biosynthetic enzymes. The polypeptide is Probable Fe(2+)-trafficking protein (Cupriavidus pinatubonensis (strain JMP 134 / LMG 1197) (Cupriavidus necator (strain JMP 134))).